We begin with the raw amino-acid sequence, 323 residues long: Lipoyl synthase (323 aa).

The [4Fe-4S] cluster site is built by C61, C66, C72, C87, C91, C94, and S300. The Radical SAM core domain maps to 73–289 (WDKKHATFMI…ETVAYSKGFL (217 aa)).

It belongs to the radical SAM superfamily. Lipoyl synthase family. Requires [4Fe-4S] cluster as cofactor.

It is found in the cytoplasm. It carries out the reaction [[Fe-S] cluster scaffold protein carrying a second [4Fe-4S](2+) cluster] + N(6)-octanoyl-L-lysyl-[protein] + 2 oxidized [2Fe-2S]-[ferredoxin] + 2 S-adenosyl-L-methionine + 4 H(+) = [[Fe-S] cluster scaffold protein] + N(6)-[(R)-dihydrolipoyl]-L-lysyl-[protein] + 4 Fe(3+) + 2 hydrogen sulfide + 2 5'-deoxyadenosine + 2 L-methionine + 2 reduced [2Fe-2S]-[ferredoxin]. Its pathway is protein modification; protein lipoylation via endogenous pathway; protein N(6)-(lipoyl)lysine from octanoyl-[acyl-carrier-protein]: step 2/2. Catalyzes the radical-mediated insertion of two sulfur atoms into the C-6 and C-8 positions of the octanoyl moiety bound to the lipoyl domains of lipoate-dependent enzymes, thereby converting the octanoylated domains into lipoylated derivatives. The polypeptide is Lipoyl synthase (Rhizobium etli (strain CIAT 652)).